The following is a 248-amino-acid chain: TPR repeat-containing protein slr0751 (248 aa).

TPR repeat units follow at residues 61-94 (PEAIFAQGVKAGEAGNYAEAVELFSVVLNLSPDS), 95-128 (PETHYNRGLAWERLGNVDQAIADYGRSIALDRYY), 129-162 (IPPYINRGNLYSQQQDHHTAIQDFTQAITYDPNR), and 163-196 (YKAYYNRANSYFQLGQYAQAIADYNRVLVLRPDY).

This chain is TPR repeat-containing protein slr0751, found in Synechocystis sp. (strain ATCC 27184 / PCC 6803 / Kazusa).